We begin with the raw amino-acid sequence, 208 residues long: Small ribosomal subunit protein uS4 (208 aa).

An S4 RNA-binding domain is found at 98-161 (RRLDNVVYRL…RKIPVLAEAQ (64 aa)).

It belongs to the universal ribosomal protein uS4 family. As to quaternary structure, part of the 30S ribosomal subunit. Contacts protein S5. The interaction surface between S4 and S5 is involved in control of translational fidelity.

In terms of biological role, one of the primary rRNA binding proteins, it binds directly to 16S rRNA where it nucleates assembly of the body of the 30S subunit. Functionally, with S5 and S12 plays an important role in translational accuracy. The chain is Small ribosomal subunit protein uS4 from Desulfovibrio desulfuricans (strain ATCC 27774 / DSM 6949 / MB).